The chain runs to 407 residues: Aminomethyltransferase, mitochondrial (407 aa).

The N-terminal 29 residues, 1–29 (MRGGLWQLGQSITRRLGQSDKKTIVRRCY), are a transit peptide targeting the mitochondrion. Glu-234, Arg-265, and Tyr-403 together coordinate substrate.

The protein belongs to the GcvT family. As to quaternary structure, the glycine cleavage system is composed of four proteins: P, T, L and H.

Its subcellular location is the mitochondrion. It carries out the reaction N(6)-[(R)-S(8)-aminomethyldihydrolipoyl]-L-lysyl-[protein] + (6S)-5,6,7,8-tetrahydrofolate = N(6)-[(R)-dihydrolipoyl]-L-lysyl-[protein] + (6R)-5,10-methylene-5,6,7,8-tetrahydrofolate + NH4(+). Its function is as follows. The glycine cleavage system catalyzes the degradation of glycine. In Flaveria anomala (Yellowtops), this protein is Aminomethyltransferase, mitochondrial (GDCST).